The following is a 231-amino-acid chain: Urease subunit gamma/beta (231 aa).

The interval 1-101 (MLLTPTELER…LVTVHQPIRP (101 aa)) is urease gamma. A urease beta region spans residues 102 to 231 (GKLPLAVMPT…RARAQHFKGA (130 aa)).

It in the N-terminal section; belongs to the urease gamma subunit family. In the C-terminal section; belongs to the urease beta subunit family. As to quaternary structure, heterohexamer of 3 UreC (alpha) and 3 UreAB (gamma/beta) subunits.

The protein localises to the cytoplasm. It catalyses the reaction urea + 2 H2O + H(+) = hydrogencarbonate + 2 NH4(+). It functions in the pathway nitrogen metabolism; urea degradation; CO(2) and NH(3) from urea (urease route): step 1/1. This Pseudomonas syringae pv. tomato (strain ATCC BAA-871 / DC3000) protein is Urease subunit gamma/beta.